The following is a 243-amino-acid chain: ATP synthase subunit a (243 aa).

7 helical membrane passes run 29-49, 54-74, 89-109, 114-134, 144-164, 182-202, and 208-228; these read NASLFMVLSTISVALFCYIGL, IIPNGIQSIVEFIYEFIVSTI, VFTIFMFIATCNLLGILPLGF, HIAVTFAISMVVFVSVTIIGF, ILLPQGTPGWLAPMMVFIELF, IAGHTIIKVIAGFVVKMNIFL, and IFIIILIGFEIFVAILQAYIF.

It belongs to the ATPase A chain family. As to quaternary structure, F-type ATPases have 2 components, CF(1) - the catalytic core - and CF(0) - the membrane proton channel. CF(1) has five subunits: alpha(3), beta(3), gamma(1), delta(1), epsilon(1). CF(0) has three main subunits: a(1), b(2) and c(9-12). The alpha and beta chains form an alternating ring which encloses part of the gamma chain. CF(1) is attached to CF(0) by a central stalk formed by the gamma and epsilon chains, while a peripheral stalk is formed by the delta and b chains.

It localises to the cell inner membrane. Functionally, key component of the proton channel; it plays a direct role in the translocation of protons across the membrane. The chain is ATP synthase subunit a from Ehrlichia canis (strain Jake).